A 464-amino-acid polypeptide reads, in one-letter code: 3-deoxy-D-manno-octulosonic acid transferase (464 aa).

A helical; Signal-anchor transmembrane segment spans residues 2–22 (MLLYYALSFILLPVYFIIILI). The RPE1 insert domain maps to 47–93 (DSLDFMQTSANKEEFKGDTSLRTTTYTLIREDEGLGSTYKLPLEASD). Glu-107 (proton acceptor) is an active-site residue. CMP contacts are provided by residues 311–312 (PR), 352–354 (FGE), and 377–380 (NILE).

This sequence belongs to the glycosyltransferase group 1 family. Glycosyltransferase 30 subfamily.

The protein localises to the cell inner membrane. The enzyme catalyses lipid IVA (E. coli) + CMP-3-deoxy-beta-D-manno-octulosonate = alpha-Kdo-(2-&gt;6)-lipid IVA (E. coli) + CMP + H(+). It participates in bacterial outer membrane biogenesis; LPS core biosynthesis. Its function is as follows. Involved in lipopolysaccharide (LPS) biosynthesis. Catalyzes the transfer of 3-deoxy-D-manno-octulosonate (Kdo) residue(s) from CMP-Kdo to lipid IV(A), the tetraacyldisaccharide-1,4'-bisphosphate precursor of lipid A. This Rickettsia conorii (strain ATCC VR-613 / Malish 7) protein is 3-deoxy-D-manno-octulosonic acid transferase (waaA).